We begin with the raw amino-acid sequence, 141 residues long: Large ribosomal subunit protein uL11 (141 aa).

The protein belongs to the universal ribosomal protein uL11 family. Part of the ribosomal stalk of the 50S ribosomal subunit. Interacts with L10 and the large rRNA to form the base of the stalk. L10 forms an elongated spine to which L12 dimers bind in a sequential fashion forming a multimeric L10(L12)X complex. One or more lysine residues are methylated.

Forms part of the ribosomal stalk which helps the ribosome interact with GTP-bound translation factors. The chain is Large ribosomal subunit protein uL11 from Herpetosiphon aurantiacus (strain ATCC 23779 / DSM 785 / 114-95).